Consider the following 1311-residue polypeptide: Suppressor of presenilin protein 4 (1311 aa).

Residues 1-11 (MSSEPTSSIES) are compositionally biased toward polar residues. Disordered stretches follow at residues 1 to 58 (MSSE…DDLN) and 75 to 95 (MFED…STAH). 2 C2H2-type zinc fingers span residues 112 to 134 (HACH…TKMH) and 141 to 163 (FACE…NNIH). Residues 226-304 (EFDTTPPPIL…PPPVRKDVEK (79 aa)) form a disordered region. Residues 280–293 (SPKGSLPSSSASSV) show a composition bias toward low complexity. C2H2-type zinc fingers lie at residues 327-349 (QRCP…SGGH), 355-379 (YICP…YILH), 451-476 (KKCN…VKTH), and 487-510 (FLCL…LIEH). The segment at 544–563 (VKEEPKEADGDESGDESFDS) is disordered. The segment covering 552 to 561 (DGDESGDESF) has biased composition (acidic residues). 6 consecutive C2H2-type zinc fingers follow at residues 585 to 607 (FCCN…YDKH), 613 to 635 (FKCQ…EKLH), 709 to 731 (FQCT…KKRH), 737 to 759 (YRCV…LKQH), 794 to 816 (YCCD…HRNH), and 823 to 845 (NICS…TIIH). Positions 865–1002 (RPVSSLTDLN…ESPEPDESVE (138 aa)) are disordered. A compositionally biased stretch (basic and acidic residues) spans 874-897 (NSEKMNERKSTKRKMLDKVEKMEV). Positions 898-907 (GEDEEDDEES) are enriched in acidic residues. Residues 908 to 920 (VDKGTDDGDYKQR) show a composition bias toward basic and acidic residues. Polar residues predominate over residues 956-979 (NRINYSLLSKNGSGKPTPSTSSAN). C2H2-type zinc fingers lie at residues 1022 to 1044 (LKCP…RYYH), 1053 to 1075 (YACS…LKLH), 1104 to 1126 (YYCK…SAYH), 1162 to 1184 (KYCK…LDRH), 1190 to 1212 (YKCY…QLNH), and 1261 to 1284 (LKCP…SVHH).

Expressed in neurons.

The protein localises to the nucleus. Its function is as follows. Probable transcriptional regulator, which participates in the transcriptional repression of the presenilin protein hop-1. Might play a role in the oxidative stress response. This is Suppressor of presenilin protein 4 (spr-4) from Caenorhabditis elegans.